A 137-amino-acid chain; its full sequence is 14 kDa proline-rich protein DC2.15 (137 aa).

The first 25 residues, 1-25 (MGSKNSASVALFFTLNILFFALVSS), serve as a signal peptide directing secretion. Positions 30–53 (PDPYKPKPKPTPKPTPTPYPSAGK) are disordered. Residues 38 to 48 (KPTPKPTPTPY) are compositionally biased toward pro residues. Residues 88-104 (LEGLVNLEAAVCLCTAI) traverse the membrane as a helical segment.

Its subcellular location is the membrane. Functionally, may be connected with the initiation of embryogenesis or with the metabolic changes produced by the removal of auxins. This chain is 14 kDa proline-rich protein DC2.15, found in Daucus carota (Wild carrot).